The following is a 120-amino-acid chain: Large ribosomal subunit protein uL18 (120 aa).

The segment at Met1–Thr23 is disordered. Over residues Ser8–Ile20 the composition is skewed to basic residues.

This sequence belongs to the universal ribosomal protein uL18 family. Part of the 50S ribosomal subunit; part of the 5S rRNA/L5/L18/L25 subcomplex. Contacts the 5S and 23S rRNAs.

In terms of biological role, this is one of the proteins that bind and probably mediate the attachment of the 5S RNA into the large ribosomal subunit, where it forms part of the central protuberance. This Microcystis aeruginosa (strain NIES-843 / IAM M-2473) protein is Large ribosomal subunit protein uL18.